The primary structure comprises 362 residues: MDSPEVTFTLAYLVFAVCFVFTPNEFHAAGLTVQNLLSGWLGSEDAAFVPFHLRRTAATLLCHSLLPLGYYVGMCLAASEKRLHALSQAPEAWRLFLLLAVTLPSIACILIYYWSRDRWACHPLARTLALYALPQSGWQAVASSVNTEFRRIDKFATGAPGARVIVTDTWVMKVTTYRVHVAQQQDVHLTVTESRQHELSPDSNLPVQLLTIRVASTNPAVQAFDIWLNSTEYGELCEKLRAPIRRAAHVVIHQSLGDLFLETFASLVEVNPAYSVPSSQELEACIGCMQTRASVKLVKTCQEAATGECQQCYCRPMWCLTCMGKWFASRQDPLRPDTWLASRVPCPTCRARFCILDVCTVR.

The Lumenal segment spans residues 1–6; sequence MDSPEV. A helical transmembrane segment spans residues 7-27; the sequence is TFTLAYLVFAVCFVFTPNEFH. Residues 28–56 are Cytoplasmic-facing; the sequence is AAGLTVQNLLSGWLGSEDAAFVPFHLRRT. Residues 57-77 form a helical membrane-spanning segment; sequence AATLLCHSLLPLGYYVGMCLA. Over 78–94 the chain is Lumenal; that stretch reads ASEKRLHALSQAPEAWR. Residues 95–115 traverse the membrane as a helical segment; that stretch reads LFLLLAVTLPSIACILIYYWS. Residues 116–362 lie on the Cytoplasmic side of the membrane; the sequence is RDRWACHPLA…FCILDVCTVR (247 aa). The RING-type; degenerate zinc finger occupies 285–350; the sequence is CIGCMQTRAS…ASRVPCPTCR (66 aa).

This sequence belongs to the TMEM129 family. Integral component of ER-resident dislocation complexes.

It is found in the endoplasmic reticulum membrane. It carries out the reaction S-ubiquitinyl-[E2 ubiquitin-conjugating enzyme]-L-cysteine + [acceptor protein]-L-lysine = [E2 ubiquitin-conjugating enzyme]-L-cysteine + N(6)-ubiquitinyl-[acceptor protein]-L-lysine.. The protein operates within protein modification; protein ubiquitination. In terms of biological role, E3 ubiquitin-protein ligase involved in ER-associated protein degradation, preferentially associates with the E2 enzyme UBE2J2. Exploited by viral US11 proteins to mediate HLA class I proteins degradation. In Homo sapiens (Human), this protein is E3 ubiquitin-protein ligase TM129 (TMEM129).